The chain runs to 212 residues: Large ribosomal subunit protein uL1 (212 aa).

The protein belongs to the universal ribosomal protein uL1 family. As to quaternary structure, part of the 50S ribosomal subunit.

Binds directly to 23S rRNA. Probably involved in E site tRNA release. Functionally, protein L1 is also a translational repressor protein, it controls the translation of its operon by binding to its mRNA. This is Large ribosomal subunit protein uL1 from Methanothrix thermoacetophila (strain DSM 6194 / JCM 14653 / NBRC 101360 / PT) (Methanosaeta thermophila).